Here is a 383-residue protein sequence, read N- to C-terminus: MTATLALTEDLIRRRSVTPADEGCQAVLETRLKALGFTCEAIVSGPDDFRVTNLWAVKRGTQGTDGKLLAFAGHTDVVPTGPLEQWNSDPFEPTHRDGRLYGRGAADMKTSIAGFVVAVEEFVKAHPAHAGSIAFLITSDEEGPAHDGTIKVVEALKARGERLDYCVIGEPTSVDTLGDMVKNGRRGSLSGKLVVKGVQCHIAYPHLGRNPIHEAAPALAELAAEVWDQGNEYFPPTSWQMSNIHGGTGATNVIPGHVTIDFNFRFSTASTPEGLKSRVHAILDKHKLEYTLDWTLGGEPFLTPRGDLSDALSAAIEAETGVKTELSTTGGTSDGRFIAKICPQVIEFGPPNATIHKIDENVEVRFIDPLKNVYRGVLERLIA.

Zn(2+) is bound at residue H74. D76 is a catalytic residue. D107 is a binding site for Zn(2+). The active-site Proton acceptor is the E141. Residues E142, E170, and H356 each contribute to the Zn(2+) site.

It belongs to the peptidase M20A family. DapE subfamily. As to quaternary structure, homodimer. The cofactor is Zn(2+). It depends on Co(2+) as a cofactor.

It carries out the reaction N-succinyl-(2S,6S)-2,6-diaminopimelate + H2O = (2S,6S)-2,6-diaminopimelate + succinate. The protein operates within amino-acid biosynthesis; L-lysine biosynthesis via DAP pathway; LL-2,6-diaminopimelate from (S)-tetrahydrodipicolinate (succinylase route): step 3/3. Functionally, catalyzes the hydrolysis of N-succinyl-L,L-diaminopimelic acid (SDAP), forming succinate and LL-2,6-diaminopimelate (DAP), an intermediate involved in the bacterial biosynthesis of lysine and meso-diaminopimelic acid, an essential component of bacterial cell walls. This is Succinyl-diaminopimelate desuccinylase from Cupriavidus pinatubonensis (strain JMP 134 / LMG 1197) (Cupriavidus necator (strain JMP 134)).